We begin with the raw amino-acid sequence, 73 residues long: Alternative prion protein (73 aa).

Residues 32-52 (WWWLGAASWWWLGAAPWWWLG) traverse the membrane as a helical segment.

In terms of tissue distribution, detected in brain homogenate, primary neurons, and peripheral blood mononuclear cells (at protein level).

The protein resides in the mitochondrion outer membrane. This chain is Alternative prion protein (PRNP), found in Homo sapiens (Human).